A 320-amino-acid polypeptide reads, in one-letter code: o-succinylbenzoate synthase (320 aa).

Lysine 133 acts as the Proton donor in catalysis. Residues aspartate 161, glutamate 190, and aspartate 213 each contribute to the Mg(2+) site. Catalysis depends on lysine 235, which acts as the Proton acceptor.

It belongs to the mandelate racemase/muconate lactonizing enzyme family. MenC type 1 subfamily. Requires a divalent metal cation as cofactor.

The catalysed reaction is (1R,6R)-6-hydroxy-2-succinyl-cyclohexa-2,4-diene-1-carboxylate = 2-succinylbenzoate + H2O. It participates in quinol/quinone metabolism; 1,4-dihydroxy-2-naphthoate biosynthesis; 1,4-dihydroxy-2-naphthoate from chorismate: step 4/7. Its pathway is quinol/quinone metabolism; menaquinone biosynthesis. Converts 2-succinyl-6-hydroxy-2,4-cyclohexadiene-1-carboxylate (SHCHC) to 2-succinylbenzoate (OSB). In Escherichia fergusonii (strain ATCC 35469 / DSM 13698 / CCUG 18766 / IAM 14443 / JCM 21226 / LMG 7866 / NBRC 102419 / NCTC 12128 / CDC 0568-73), this protein is o-succinylbenzoate synthase.